Consider the following 345-residue polypeptide: GTPase Obg (345 aa).

Positions 1–159 (MKFIDEAIIK…RTLRLELKLL (159 aa)) constitute an Obg domain. Residues 127–148 (NARFKSSTNRAPRKTTQGKPGE) form a disordered region. A compositionally biased stretch (polar residues) spans 130–144 (FKSSTNRAPRKTTQG). The 175-residue stretch at 160–334 (ADVGLLGLPN…LIHAVMQYLE (175 aa)) folds into the OBG-type G domain. Residues 166–173 (GLPNAGKS), 191–195 (FTTLH), 213–216 (DIPG), 284–287 (NKTD), and 315–317 (SAL) each bind GTP. Ser173 and Thr193 together coordinate Mg(2+).

This sequence belongs to the TRAFAC class OBG-HflX-like GTPase superfamily. OBG GTPase family. In terms of assembly, monomer. The cofactor is Mg(2+).

The protein resides in the cytoplasm. Its function is as follows. An essential GTPase which binds GTP, GDP and possibly (p)ppGpp with moderate affinity, with high nucleotide exchange rates and a fairly low GTP hydrolysis rate. Plays a role in control of the cell cycle, stress response, ribosome biogenesis and in those bacteria that undergo differentiation, in morphogenesis control. This Nitrosococcus oceani (strain ATCC 19707 / BCRC 17464 / JCM 30415 / NCIMB 11848 / C-107) protein is GTPase Obg.